A 102-amino-acid chain; its full sequence is Acid shock protein (102 aa).

The signal sequence occupies residues 1 to 21; sequence MKKVLGLVVAAAMGLSSAAFA. The segment covering 22-41 has biased composition (low complexity); the sequence is AETATTPAPTATTTKAAPAK. A propeptide spanning residues 22-58 is cleaved from the precursor; sequence AETATTPAPTATTTKAAPAKTTHHKKQHKAAPAQKAQ. Residues 22–102 form a disordered region; sequence AETATTPAPT…PAKPAAQPAA (81 aa). Over residues 80–90 the composition is skewed to basic residues; sequence AAKKHAGKHSH. A compositionally biased stretch (low complexity) spans 91 to 102; the sequence is QQPAKPAAQPAA.

The protein belongs to the Asr family. In terms of processing, proteolytic processing gives rise to the active protein.

It is found in the periplasm. Its function is as follows. Required for growth and/or survival at acidic conditions. This Escherichia coli (strain SE11) protein is Acid shock protein.